A 454-amino-acid polypeptide reads, in one-letter code: UDP-N-acetylmuramoylalanine--D-glutamate ligase (454 aa).

Residue 118–124 (GTNGKTT) coordinates ATP.

It belongs to the MurCDEF family.

Its subcellular location is the cytoplasm. It catalyses the reaction UDP-N-acetyl-alpha-D-muramoyl-L-alanine + D-glutamate + ATP = UDP-N-acetyl-alpha-D-muramoyl-L-alanyl-D-glutamate + ADP + phosphate + H(+). The protein operates within cell wall biogenesis; peptidoglycan biosynthesis. Its function is as follows. Cell wall formation. Catalyzes the addition of glutamate to the nucleotide precursor UDP-N-acetylmuramoyl-L-alanine (UMA). This Thermosynechococcus vestitus (strain NIES-2133 / IAM M-273 / BP-1) protein is UDP-N-acetylmuramoylalanine--D-glutamate ligase.